A 174-amino-acid chain; its full sequence is Achaete-scute homolog 3 (174 aa).

A basic motif region spans residues Ala92–Val105. The bHLH domain maps to Ala92 to Leu144. The helix-loop-helix motif stretch occupies residues Lys106–Leu144. The interval Ser153 to Ile174 is disordered.

As to quaternary structure, efficient DNA binding requires dimerization with another bHLH protein. As to expression, expressed in the salivary duct cells. Also expressed at lower levels in testis and epididymis. Expressed in the olfactory epithelium (OE), in a subset of apical microvillar cells.

It localises to the nucleus. Functionally, transcriptional repressor. Inhibits myogenesis. Plays a role in progenitor cells which differentiate into ductal and acinar, but not myoepithelial, cell lineages in the salivary glands. Involved in the functions of the microvillar cells and Bowman's glands and probably, in a non-cell-autonomous manner, in the development or regeneration of a complete olfactory epithelium (OE). The chain is Achaete-scute homolog 3 (Ascl3) from Mus musculus (Mouse).